A 70-amino-acid polypeptide reads, in one-letter code: Antimicrobial peptide VpCT1 (70 aa).

The first 23 residues, 1–23 (MKNQFAVLLVALVLLQLFSQSEA), serve as a signal peptide directing secretion. Leu-36 is modified (leucine amide). Residues 37–70 (GKRGLRNFDLEQMDDTYEPELSEADLRYLQDLLR) constitute a propeptide that is removed on maturation.

Belongs to the non-disulfide-bridged peptide (NDBP) superfamily. Short antimicrobial peptide (group 4) family. As to expression, expressed by the venom gland.

It localises to the secreted. Its subcellular location is the target cell membrane. Its function is as follows. Antimicrobial peptide with potent activity against bacteria S.aureus (MIC=4.7 uM) and E.coli (MIC=31.5 uM), and pathogenic yeasts C.albicans (MIC=25 uM) and C.glabrata (MIC=12.5 uM). Is not very effective against P.aeruginosa (MIC=150 and &gt;300 uM). Also provokes moderate hemolysis on human erythrocytes (HC(50)=10.5 uM). In Mesomexovis punctatus (Scorpion), this protein is Antimicrobial peptide VpCT1.